A 255-amino-acid chain; its full sequence is MTARPDSDQDMPLVAHLTELRSRLLRSVAAVLLIFAALFYFAQDIYALVSAPLRAYLPEGATMIATGVASPFLAPFKLTLMISLFLAMPVVLHQVWGFIAPGLYQHEKRIAMPLMASSVLLFYAGMAFAYFVVFPIMFGFFASVTPEGVAMMTDIGQYLDFVLTLFFAFGVAFEVPVATFLLIWVGIVDVASLRNSRPYVIVGCFVVGMVLTPPDVFSQTLLAVPMWLLFEIGVFFGARIRHREEPAASDGPSQP.

7 helical membrane-spanning segments follow: residues 28 to 48 (VAAVLLIFAALFYFAQDIYAL), 56 to 76 (YLPEGATMIATGVASPFLAPF), 80 to 100 (LMISLFLAMPVVLHQVWGFIA), 121 to 141 (LFYAGMAFAYFVVFPIMFGFF), 165 to 185 (LFFAFGVAFEVPVATFLLIWV), 195 to 212 (NSRPYVIVGCFVVGMVLT), and 216 to 236 (VFSQTLLAVPMWLLFEIGVFF).

It belongs to the TatC family. The Tat system comprises two distinct complexes: a TatABC complex, containing multiple copies of TatA, TatB and TatC subunits, and a separate TatA complex, containing only TatA subunits. Substrates initially bind to the TatABC complex, which probably triggers association of the separate TatA complex to form the active translocon.

The protein localises to the cell membrane. Its function is as follows. Part of the twin-arginine translocation (Tat) system that transports large folded proteins containing a characteristic twin-arginine motif in their signal peptide across membranes. Together with TatB, TatC is part of a receptor directly interacting with Tat signal peptides. In Azotobacter chroococcum mcd 1, this protein is Sec-independent protein translocase protein TatC.